The following is a 594-amino-acid chain: Elongation factor 4 (594 aa).

A tr-type G domain is found at 2–184 (KNIRNFSIIA…TIVAKVPAPE (183 aa)). GTP is bound by residues 14 to 19 (DHGKST) and 131 to 134 (NKID).

The protein belongs to the TRAFAC class translation factor GTPase superfamily. Classic translation factor GTPase family. LepA subfamily.

Its subcellular location is the cell inner membrane. The catalysed reaction is GTP + H2O = GDP + phosphate + H(+). Required for accurate and efficient protein synthesis under certain stress conditions. May act as a fidelity factor of the translation reaction, by catalyzing a one-codon backward translocation of tRNAs on improperly translocated ribosomes. Back-translocation proceeds from a post-translocation (POST) complex to a pre-translocation (PRE) complex, thus giving elongation factor G a second chance to translocate the tRNAs correctly. Binds to ribosomes in a GTP-dependent manner. The polypeptide is Elongation factor 4 (Francisella tularensis subsp. tularensis (strain FSC 198)).